The primary structure comprises 93 residues: Small ribosomal subunit protein uS19 (93 aa).

This sequence belongs to the universal ribosomal protein uS19 family.

Functionally, protein S19 forms a complex with S13 that binds strongly to the 16S ribosomal RNA. This is Small ribosomal subunit protein uS19 from Syntrophus aciditrophicus (strain SB).